We begin with the raw amino-acid sequence, 647 residues long: Zinc finger protein 567 (647 aa).

Residues 32-77 enclose the KRAB domain; the sequence is MDVMLENYCHLISVGCHMTKPDVILKLERGEEPWTSFKGHTCLEEN. Glycyl lysine isopeptide (Lys-Gly) (interchain with G-Cter in SUMO2) cross-links involve residues Lys173, Lys202, and Lys217. A C2H2-type 1; degenerate zinc finger spans residues 210–232; the sequence is FEYNDCEKAFLKRGGPVTHSRTY. C2H2-type zinc fingers lie at residues 253-275, 281-303, 309-331, 337-359, 365-387, 393-415, and 421-443; these read HTCTECGKSFCRKSVLILHQGIH, YQCHQCGNSFRRKSYLIDHQRTH, FVCNECGKSFRLKTALTDHQRTH, YECPQCRNAFRLKSHLIRHQRTH, YECSDCGKSFRQKTTLSLHQRIH, YICKECGKSFHQKANLTVHQRTH, and YICNECGKSFSQKTTLALHEKTH. Residue Lys447 forms a Glycyl lysine isopeptide (Lys-Gly) (interchain with G-Cter in SUMO2) linkage. 7 consecutive C2H2-type zinc fingers follow at residues 449-471, 477-499, 505-527, 533-555, 561-583, 589-611, and 617-639; these read YICNECGKSFPQKTTLVAHQRTH, YECPHCGKAFRMKSYLIDHHRTH, YECNECGKSFSQKTNLNLHQRIH, YICNECGKSFRQKATLTVHQKIH, YECPQCGKAFSRKSYLIHHQRTH, YKCSECGKCFRQKTNLIVHQRTH, and YICNECGKSFSYKRNLIVHQRTH.

It belongs to the krueppel C2H2-type zinc-finger protein family.

Its subcellular location is the nucleus. In terms of biological role, may be involved in transcriptional regulation. The sequence is that of Zinc finger protein 567 (ZNF567) from Bos taurus (Bovine).